The chain runs to 451 residues: Gamma-aminobutyric acid receptor subunit alpha-2 (451 aa).

Positions 1–28 are cleaved as a signal peptide; that stretch reads MKTKLNSSNMQLLLFVFLAWDPARLVLA. Topologically, residues 29 to 249 are extracellular; it reads NIQEDEAKNN…MTAHFHLKRK (221 aa). A glycan (N-linked (GlcNAc...) asparagine) is linked at asparagine 38. Residue arginine 94 participates in 4-aminobutanoate binding. N-linked (GlcNAc...) asparagine glycosylation is present at asparagine 138. Residue threonine 157 participates in 4-aminobutanoate binding. The cysteines at positions 166 and 180 are disulfide-linked. The N-linked (GlcNAc...) asparagine glycan is linked to asparagine 201. Residues 250–270 traverse the membrane as a helical segment; the sequence is IGYFVIQTYLPCIMTVILSQV. The Cytoplasmic portion of the chain corresponds to 271–280; the sequence is SFWLNRESVP. Residues 281–300 form a helical membrane-spanning segment; that stretch reads ARTVFGVTTVLTMTTLSISA. Residues 301–311 lie on the Extracellular side of the membrane; the sequence is RNSLPKVAYAT. The helical transmembrane segment at 312-332 threads the bilayer; that stretch reads AMDWFIAVCYAFVFSALIEFA. The Cytoplasmic portion of the chain corresponds to 333-420; the sequence is TVNYFTKRGW…FNSVSKIDRM (88 aa). The helical transmembrane segment at 421 to 441 threads the bilayer; the sequence is SRIVFPVLFGTFNLVYWATYL. Topologically, residues 442-451 are extracellular; it reads NREPVLGVSP.

This sequence belongs to the ligand-gated ion channel (TC 1.A.9) family. Gamma-aminobutyric acid receptor (TC 1.A.9.5) subfamily. GABRA2 sub-subfamily. Heteropentamer, formed by a combination of alpha (GABRA1-6), beta (GABRB1-3), gamma (GABRG1-3), delta (GABRD), epsilon (GABRE), rho (GABRR1-3), pi (GABRP) and theta (GABRQ) subunits, each subunit exhibiting distinct physiological and pharmacological properties. Interacts with UBQLN1. Interacts with KIF21B. Interacts with LHFPL4. Interacts with SHISA7; interaction leads to the regulation of GABA(A) receptor trafficking, channel deactivation kinetics and pharmacology. Post-translationally, glycosylated.

It localises to the postsynaptic cell membrane. The protein localises to the cell membrane. The protein resides in the cytoplasmic vesicle membrane. Its subcellular location is the cell projection. It is found in the dendrite. The enzyme catalyses chloride(in) = chloride(out). With respect to regulation, activated by pentobarbital. Inhibited by the antagonist bicuculline. Functionally, alpha subunit of the heteropentameric ligand-gated chloride channel gated by gamma-aminobutyric acid (GABA), a major inhibitory neurotransmitter in the brain. GABA-gated chloride channels, also named GABA(A) receptors (GABAAR), consist of five subunits arranged around a central pore and contain GABA active binding site(s) located at the alpha and beta subunit interface(s). When activated by GABA, GABAARs selectively allow the flow of chloride anions across the cell membrane down their electrochemical gradient. Chloride influx into the postsynaptic neuron following GABAAR opening decreases the neuron ability to generate a new action potential, thereby reducing nerve transmission. The alpha-2 subunit exhibits synaptogenic activity together with beta-2 and very little to no activity together with beta-3, the gamma-2 subunit being necessary but not sufficient to induce rapid synaptic contacts formation. This is Gamma-aminobutyric acid receptor subunit alpha-2 (GABRA2) from Bos taurus (Bovine).